The following is a 272-amino-acid chain: Small ribosomal subunit protein mS23 (272 aa).

The interval 233–272 (KENASKAAGDASAVSSEKQVEDDVVNFDESTDADQEVLHF) is disordered. Over residues 252–272 (VEDDVVNFDESTDADQEVLHF) the composition is skewed to acidic residues.

It belongs to the mitochondrion-specific ribosomal protein mS23 family. Component of the mitochondrial small ribosomal subunit.

Its subcellular location is the mitochondrion. The protein is Small ribosomal subunit protein mS23 (RSM25) of Candida glabrata (strain ATCC 2001 / BCRC 20586 / JCM 3761 / NBRC 0622 / NRRL Y-65 / CBS 138) (Yeast).